Consider the following 284-residue polypeptide: F-box protein PP2-B5 (284 aa).

The F-box domain maps to 32–80 (ASFDDLPDDCLAIISSFTSTPRDAFLAALVSKSFGLQFNSDSVWEKFLP).

The sequence is that of F-box protein PP2-B5 (PP2B5) from Arabidopsis thaliana (Mouse-ear cress).